The sequence spans 204 residues: dITP/XTP pyrophosphatase (204 aa).

Substrate is bound at residue 7 to 12; that stretch reads TNNKDK. Mg(2+) contacts are provided by D38 and D74. The Proton acceptor role is filled by D74. Residues S75, 156–159, K179, and 184–185 contribute to the substrate site; these read FGYD and HR.

Belongs to the HAM1 NTPase family. In terms of assembly, homodimer. Mg(2+) is required as a cofactor.

It carries out the reaction XTP + H2O = XMP + diphosphate + H(+). It catalyses the reaction dITP + H2O = dIMP + diphosphate + H(+). The enzyme catalyses ITP + H2O = IMP + diphosphate + H(+). Its function is as follows. Pyrophosphatase that catalyzes the hydrolysis of nucleoside triphosphates to their monophosphate derivatives, with a high preference for the non-canonical purine nucleotides XTP (xanthosine triphosphate), dITP (deoxyinosine triphosphate) and ITP. Seems to function as a house-cleaning enzyme that removes non-canonical purine nucleotides from the nucleotide pool, thus preventing their incorporation into DNA/RNA and avoiding chromosomal lesions. The chain is dITP/XTP pyrophosphatase from Campylobacter fetus subsp. fetus (strain 82-40).